Here is a 670-residue protein sequence, read N- to C-terminus: DNA topoisomerase 6 subunit B (670 aa).

A disordered region spans residues Met-1 to Pro-30. Basic and acidic residues predominate over residues Val-7–Leu-25. Residues Asn-60, Asp-160, Thr-181–Lys-182, Gly-190–Lys-197, and Lys-516 each bind ATP.

This sequence belongs to the TOP6B family. In terms of assembly, homodimer. Heterotetramer of two TOP6A and two TOP6B subunits. Interacts with SPO11-2, but not with SPO11-1, RHL1 or BIN4. As to expression, highly expressed in leaves, stems, flowers and seedlings.

The protein resides in the nucleus. The enzyme catalyses ATP-dependent breakage, passage and rejoining of double-stranded DNA.. Component of the DNA topoisomerase VI involved in chromatin organization and progression of endoreduplication cycles. Relaxes both positive and negative superturns and exhibits a strong decatenase activity. The B subunit binds ATP. Involved in cell-elongation processes. The sequence is that of DNA topoisomerase 6 subunit B from Arabidopsis thaliana (Mouse-ear cress).